The sequence spans 248 residues: 4-hydroxy-tetrahydrodipicolinate reductase (248 aa).

NAD(+) contacts are provided by residues Asp-32, 74–76 (GTT), and 99–102 (SANF). The Proton donor/acceptor role is filled by His-134. Residue His-135 participates in (S)-2,3,4,5-tetrahydrodipicolinate binding. Residue Lys-138 is the Proton donor of the active site. Position 144-145 (144-145 (GT)) interacts with (S)-2,3,4,5-tetrahydrodipicolinate.

This sequence belongs to the DapB family.

Its subcellular location is the cytoplasm. The enzyme catalyses (S)-2,3,4,5-tetrahydrodipicolinate + NAD(+) + H2O = (2S,4S)-4-hydroxy-2,3,4,5-tetrahydrodipicolinate + NADH + H(+). It catalyses the reaction (S)-2,3,4,5-tetrahydrodipicolinate + NADP(+) + H2O = (2S,4S)-4-hydroxy-2,3,4,5-tetrahydrodipicolinate + NADPH + H(+). The protein operates within amino-acid biosynthesis; L-lysine biosynthesis via DAP pathway; (S)-tetrahydrodipicolinate from L-aspartate: step 4/4. Functionally, catalyzes the conversion of 4-hydroxy-tetrahydrodipicolinate (HTPA) to tetrahydrodipicolinate. This Chlorobium luteolum (strain DSM 273 / BCRC 81028 / 2530) (Pelodictyon luteolum) protein is 4-hydroxy-tetrahydrodipicolinate reductase.